The primary structure comprises 277 residues: Diaminopimelate epimerase (277 aa).

Substrate is bound by residues Asn-15, Gln-48, and Asn-66. Cys-75 acts as the Proton donor in catalysis. Substrate is bound by residues 76–77, Asn-156, Asn-189, and 207–208; these read GN and ER. Residue Cys-216 is the Proton acceptor of the active site. 217-218 serves as a coordination point for substrate; that stretch reads GS.

The protein belongs to the diaminopimelate epimerase family. As to quaternary structure, homodimer.

The protein localises to the cytoplasm. The enzyme catalyses (2S,6S)-2,6-diaminopimelate = meso-2,6-diaminopimelate. It functions in the pathway amino-acid biosynthesis; L-lysine biosynthesis via DAP pathway; DL-2,6-diaminopimelate from LL-2,6-diaminopimelate: step 1/1. Its function is as follows. Catalyzes the stereoinversion of LL-2,6-diaminopimelate (L,L-DAP) to meso-diaminopimelate (meso-DAP), a precursor of L-lysine and an essential component of the bacterial peptidoglycan. This Acidiphilium cryptum (strain JF-5) protein is Diaminopimelate epimerase.